The following is a 189-amino-acid chain: dCTP deaminase (189 aa).

DCTP is bound by residues 112 to 117 (KSTYAR), 136 to 138 (TLE), glutamine 157, tyrosine 171, and glutamine 181. Glutamate 138 acts as the Proton donor/acceptor in catalysis.

The protein belongs to the dCTP deaminase family. In terms of assembly, homotrimer.

It catalyses the reaction dCTP + H2O + H(+) = dUTP + NH4(+). It functions in the pathway pyrimidine metabolism; dUMP biosynthesis; dUMP from dCTP (dUTP route): step 1/2. Functionally, catalyzes the deamination of dCTP to dUTP. This Xanthomonas axonopodis pv. citri (strain 306) protein is dCTP deaminase.